Reading from the N-terminus, the 286-residue chain is Probable aquaporin-3 (286 aa).

A disordered region spans residues 1 to 34 (MADTYGMNGHNGHVKDRRSSSMNGRNRLYAQQEP). Residues 1–52 (MADTYGMNGHNGHVKDRRSSSMNGRNRLYAQQEPQRTTHLSEFGKHMVAASG) lie on the Cytoplasmic side of the membrane. Residues 53–73 (EFVGTFLFLYFGYAGNIVAVL) form a helical membrane-spanning segment. The Extracellular portion of the chain corresponds to 74-87 (QEPISGPNGTLANN). 2 N-linked (GlcNAc...) asparagine glycosylation sites follow: asparagine 81 and asparagine 86. Residues 88 to 108 (TVMYIAMAYGFSLLVNVWTFY) traverse the membrane as a helical segment. The Cytoplasmic portion of the chain corresponds to 109 to 135 (RISGGLFNPAVTFGLCLSGQLPWIRAL). The NPA 1 signature appears at 116-118 (NPA). A helical membrane pass occupies residues 136–156 (FLFPSQIIAAMCAGGLVNAMF). The Extracellular portion of the chain corresponds to 157–175 (PGSASIANTTLGPNTSIAQ). N-linked (GlcNAc...) asparagine glycans are attached at residues asparagine 164 and asparagine 170. The helical transmembrane segment at 176-196 (GVFLEMFFTAQLVFVVLMLAA) threads the bilayer. Residues 197–202 (EKSRDT) are Cytoplasmic-facing. A helical transmembrane segment spans residues 203-223 (FLAPVGIGLALFVALIPGVFV). Residues 224–244 (TGGSANPVRSFGCAVGSRDFP) lie on the Extracellular side of the membrane. Residues 229–231 (NPV) carry the NPA 2 motif. A helical transmembrane segment spans residues 245–265 (GYHWIYWVGPLLGAALAAGYF). Over 266–286 (RLVKMMHYEEANPGQDSPVDV) the chain is Cytoplasmic.

This sequence belongs to the MIP/aquaporin (TC 1.A.8) family.

It localises to the membrane. It carries out the reaction H2O(in) = H2O(out). In terms of biological role, probable water channel that may have redundant functions with FgAQP5. This chain is Probable aquaporin-3, found in Gibberella zeae (strain ATCC MYA-4620 / CBS 123657 / FGSC 9075 / NRRL 31084 / PH-1) (Wheat head blight fungus).